Consider the following 341-residue polypeptide: uncharacterized protein (341 aa).

58-82 (ITGGSSGIGAAAAKKIAEAGGTVVL) provides a ligand contact to NADP(+). Ser194 provides a ligand contact to substrate. The active-site Proton acceptor is the Tyr207. The tract at residues 309 to 329 (DSSAAKGSESQTDTSELDKRS) is disordered.

Belongs to the short-chain dehydrogenases/reductases (SDR) family.

This is an uncharacterized protein from Mycobacterium bovis (strain ATCC BAA-935 / AF2122/97).